The following is a 44-amino-acid chain: Iota-conotoxin-like R11.11 (44 aa).

4 disulfides stabilise this stretch: C5–C19, C12–C22, C18–C27, and C21–C36. Residue R44 is a propeptide, removed by a carboxypeptidase.

This sequence belongs to the conotoxin I1 superfamily. Expressed by the venom duct.

The protein resides in the secreted. Its function is as follows. Iota-conotoxins bind to voltage-gated sodium channels (Nav) and act as agonists by shifting the voltage-dependence of activation to more hyperpolarized levels. Produces general excitatory symptoms. The polypeptide is Iota-conotoxin-like R11.11 (Conus radiatus (Rayed cone)).